A 326-amino-acid chain; its full sequence is Dehydrogenase/reductase SDR family protein 7-like (326 aa).

Residues 1 to 17 (MKVQDMDKCAPSSDWNV) are Cytoplasmic-facing. The chain crosses the membrane as a helical; Signal-anchor for type II membrane protein span at residues 18-38 (LYWVLGTVLMPVALPLAIINI). The Peroxisomal portion of the chain corresponds to 39–326 (WQRFQAQKFR…KLENAEKKST (288 aa)). 57–81 (LITGASSGLGESLAHVFYRAGCRVI) lines the NAD(+) pocket. Serine 193 serves as a coordination point for substrate. Residue tyrosine 206 is the Proton acceptor of the active site.

It belongs to the short-chain dehydrogenases/reductases (SDR) family.

The protein localises to the peroxisome membrane. Functionally, putative oxidoreductase. This is Dehydrogenase/reductase SDR family protein 7-like from Drosophila melanogaster (Fruit fly).